The chain runs to 274 residues: Protein YeeZ (274 aa).

An N-terminal signal peptide occupies residues 1 to 24 (MKKVAIVGLGWLGMPLAMSLSARG). 170-177 (GRFFAGKT) serves as a coordination point for ATP.

The protein is Protein YeeZ (yeeZ) of Escherichia coli O157:H7.